Here is a 278-residue protein sequence, read N- to C-terminus: Membrane protein insertase YidC 2 (278 aa).

An N-terminal signal peptide occupies residues 1–18; sequence MHKRLFITLLGFIILLAG. The N-palmitoyl cysteine moiety is linked to residue Cys-19. Cys-19 is lipidated: S-diacylglycerol cysteine. 4 helical membrane passes run 55 to 75, 132 to 152, 176 to 196, and 224 to 244; these read GFAI…FMLI, MLGC…YMSL, LIMT…NSIH, and AAAL…QMHF.

Belongs to the OXA1/ALB3/YidC family. Type 2 subfamily.

Its subcellular location is the cell membrane. Functionally, required for the insertion and/or proper folding and/or complex formation of integral membrane proteins into the membrane. Involved in integration of membrane proteins that insert both dependently and independently of the Sec translocase complex, as well as at least some lipoproteins. The polypeptide is Membrane protein insertase YidC 2 (Staphylococcus epidermidis (strain ATCC 12228 / FDA PCI 1200)).